The chain runs to 315 residues: MVDFQLNNFSFDPVVSLGFAAFLFLLMALPISFWAVAGSSDSSKARFLVAISNLFLTSQLILRWWQSGHFPISNLYESLCFLTWGCTLAQLFLERAWRSPIVSAVATPVSLLSIGFASFVLPENLQSSAPLVPALRSSWLVMHVSVIMCSYAALLIGSILSFGVFLVDGKKQFNIRNSSFGSGSFRQSSELYLDERNENLNSIQPIEFTNAEQLDSLSYRSITAGFLLLTVGLISGAVWANEAWGSWWSWDPKETWALICWLVYAAYLHTRITRGWQGKKPAILAIAGFFVIIVCYIGVNLLGVGLHSYGWFFDA.

Transmembrane regions (helical) follow at residues 17–37 (LGFA…WAVA), 72–92 (ISNL…AQLF), 101–121 (IVSA…SFVL), 146–166 (VIMC…GVFL), 221–241 (SITA…VWAN), 255–272 (TWAL…HTRI), and 282–302 (AILA…VNLL).

This sequence belongs to the CcmF/CycK/Ccl1/NrfE/CcsA family. As to quaternary structure, may interact with ccs1.

It is found in the cellular thylakoid membrane. Required during biogenesis of c-type cytochromes (cytochrome c6 and cytochrome f) at the step of heme attachment. The sequence is that of Cytochrome c biogenesis protein CcsA from Prochlorococcus marinus (strain NATL2A).